Consider the following 81-residue polypeptide: Protein K6 (81 aa).

Belongs to the poxviridae K6 protein family.

This Homo sapiens (Human) protein is Protein K6.